The sequence spans 251 residues: Hydroxyacylglutathione hydrolase (251 aa).

Positions 53, 55, 57, 58, 110, 127, and 165 each coordinate Zn(2+).

This sequence belongs to the metallo-beta-lactamase superfamily. Glyoxalase II family. In terms of assembly, monomer. Requires Zn(2+) as cofactor.

It carries out the reaction an S-(2-hydroxyacyl)glutathione + H2O = a 2-hydroxy carboxylate + glutathione + H(+). Its pathway is secondary metabolite metabolism; methylglyoxal degradation; (R)-lactate from methylglyoxal: step 2/2. Functionally, thiolesterase that catalyzes the hydrolysis of S-D-lactoyl-glutathione to form glutathione and D-lactic acid. This is Hydroxyacylglutathione hydrolase from Escherichia coli O81 (strain ED1a).